Here is a 280-residue protein sequence, read N- to C-terminus: 30 kDa immediate-early protein 2 (280 aa).

Residues 36 to 164 (SEEEQGEEVE…KKSKRISELD (129 aa)) are disordered. Composition is skewed to low complexity over residues 47-67 (RGAT…TSPT), 90-101 (SSSSSSCSSASD), and 132-147 (AASS…SSGG).

Activates the E1.7 promoter. This activation is augmented by the IE1 protein. It down-regulates the transcription of genes under the control of the major IE promoter. This is 30 kDa immediate-early protein 2 (UL122) from Human cytomegalovirus (strain Towne) (HHV-5).